Reading from the N-terminus, the 1328-residue chain is Mitogen-activated protein kinase kinase kinase 19 (1328 aa).

Positions 1-19 (MSSMPKPERHAESLLDICH) are enriched in basic and acidic residues. Disordered regions lie at residues 1–28 (MSSMPKPERHAESLLDICHDTNSSPTDL), 44–74 (RSEEFDQDGDCSHSTLVNEEEDPSGGRQDWQ), 344–380 (VREEDIDCHGSKTRKPEEENSQYLSSRKNESSVAKNY), and 524–561 (QENDKHKMNSHRSKLDSKTKTSKKTPQNFVISTEGPIK). Positions 344–361 (VREEDIDCHGSKTRKPEE) are enriched in basic and acidic residues. Polar residues predominate over residues 364 to 377 (SQYLSSRKNESSVA). Over residues 524-542 (QENDKHKMNSHRSKLDSKT) the composition is skewed to basic and acidic residues. A Protein kinase domain is found at 1061–1324 (WTKGEILGKG…ALQLLKHSFL (264 aa)). Residues 1067–1075 (LGKGAYGTV) and Lys-1089 each bind ATP. Catalysis depends on Asp-1186, which acts as the Proton acceptor.

This sequence belongs to the protein kinase superfamily. STE Ser/Thr protein kinase family. STE20 subfamily.

The catalysed reaction is L-seryl-[protein] + ATP = O-phospho-L-seryl-[protein] + ADP + H(+). It catalyses the reaction L-threonyl-[protein] + ATP = O-phospho-L-threonyl-[protein] + ADP + H(+). The polypeptide is Mitogen-activated protein kinase kinase kinase 19 (MAP3K19) (Homo sapiens (Human)).